Reading from the N-terminus, the 182-residue chain is Crossover junction endodeoxyribonuclease RuvC (182 aa).

Residues D7, E69, and D141 contribute to the active site. D7, E69, and D141 together coordinate Mg(2+).

It belongs to the RuvC family. Homodimer which binds Holliday junction (HJ) DNA. The HJ becomes 2-fold symmetrical on binding to RuvC with unstacked arms; it has a different conformation from HJ DNA in complex with RuvA. In the full resolvosome a probable DNA-RuvA(4)-RuvB(12)-RuvC(2) complex forms which resolves the HJ. Mg(2+) is required as a cofactor.

The protein localises to the cytoplasm. The enzyme catalyses Endonucleolytic cleavage at a junction such as a reciprocal single-stranded crossover between two homologous DNA duplexes (Holliday junction).. Its function is as follows. The RuvA-RuvB-RuvC complex processes Holliday junction (HJ) DNA during genetic recombination and DNA repair. Endonuclease that resolves HJ intermediates. Cleaves cruciform DNA by making single-stranded nicks across the HJ at symmetrical positions within the homologous arms, yielding a 5'-phosphate and a 3'-hydroxyl group; requires a central core of homology in the junction. The consensus cleavage sequence is 5'-(A/T)TT(C/G)-3'. Cleavage occurs on the 3'-side of the TT dinucleotide at the point of strand exchange. HJ branch migration catalyzed by RuvA-RuvB allows RuvC to scan DNA until it finds its consensus sequence, where it cleaves and resolves the cruciform DNA. The chain is Crossover junction endodeoxyribonuclease RuvC from Polaromonas naphthalenivorans (strain CJ2).